Reading from the N-terminus, the 160-residue chain is MGRRFVVTVRIRRTGRSPQVRVFLVQFLGSSRPRSANGTRGFVALVLRPERIARRGPQPHPGPGDDDGQRQSGSSPALLWCRFELRGPHHPLPTGARRSAGGLPRHSGSTAPGRGAAGCARCLGSPAARPGPRAGTSRRRAVFAVSTLLRWERFPGHRQA.

Residues 1–63 (MGRRFVVTVR…RRGPQPHPGP (63 aa)) form an interaction with CDK5RAP3 and MDM2 region. 2 disordered regions span residues 49 to 74 (PERI…QSGS) and 90 to 116 (HPLP…GRGA).

In terms of assembly, does not interact with cyclins, CDK1, CDK2, CDK4, CDK5 or CDK6. Binds to BCL6, E2F1, HUWE1, MDM2, MYC, NPM1/B23, TOP1/TOPOI and UBE2I/UBC9. Interacts with TBRG1 and COMMD1. Interacts with CDKN2AIP and E4F1. Interacts with CDK5RAP3 and MDM2; form a ternary complex involved in regulation of p53/TP53. Interacts with NOP53; the interaction is direct and promotes ARF nucleoplasmic relocalization and ubiquitin-mediated proteasomal degradation. Interacts with TTF1 (via the N-terminal region (NRD) and a C-terminal region); the interaction is direct and inhibits the nucleolar localization of TTF1. In terms of processing, ubiquitinated in normal cells by TRIP12 via the ubiquitin fusion degradation (UFD) pathway, a process that mediates ubiquitination at the N-terminus, regardless of the absence of lysine residues. Ubiquitination leads to its proteasomal degradation. In cancer cells, however, TRIP12 is located in a different cell compartment, preventing ubiquitination and degradation. In terms of tissue distribution, widely expressed with very low levels in kidney and colon.

The protein resides in the nucleus. Its subcellular location is the nucleolus. The protein localises to the nucleoplasm. Its function is as follows. Capable of inducing cell cycle arrest in G1 and G2 phases. Acts as a tumor suppressor. Binds to MDM2 and blocks its nucleocytoplasmic shuttling by sequestering it in the nucleolus. This inhibits the oncogenic action of MDM2 by blocking MDM2-induced degradation of p53 and enhancing p53-dependent transactivation and apoptosis. Also induces G2 arrest and apoptosis in a p53-independent manner by preventing the activation of cyclin B1/CDC2 complexes. Binds to BCL6 and down-regulates BCL6-induced transcriptional repression. Binds to E2F1 and MYC and blocks their transcriptional activator activity but has no effect on MYC transcriptional repression. Binds to TOP1/TOPOI and stimulates its activity. This complex binds to rRNA gene promoters and may play a role in rRNA transcription and/or maturation. Interacts with NPM1/B23 and promotes its polyubiquitination and degradation, thus inhibiting rRNA processing. Plays a role in inhibiting ribosome biogenesis, perhaps by binding to the nucleolar localization sequence of transcription termination factor TTF1, and thereby preventing nucleolar localization of TTF1. Interacts with COMMD1 and promotes its 'Lys63'-linked polyubiquitination. Interacts with UBE2I/UBC9 and enhances sumoylation of a number of its binding partners including MDM2 and E2F1. Binds to HUWE1 and represses its ubiquitin ligase activity. May play a role in controlling cell proliferation and apoptosis during mammary gland development. The chain is Tumor suppressor ARF from Rattus norvegicus (Rat).